The chain runs to 330 residues: Phenylalanine--tRNA ligase alpha subunit (330 aa).

Glu246 is a Mg(2+) binding site.

The protein belongs to the class-II aminoacyl-tRNA synthetase family. Phe-tRNA synthetase alpha subunit type 1 subfamily. As to quaternary structure, tetramer of two alpha and two beta subunits. Mg(2+) serves as cofactor.

The protein resides in the cytoplasm. It carries out the reaction tRNA(Phe) + L-phenylalanine + ATP = L-phenylalanyl-tRNA(Phe) + AMP + diphosphate + H(+). This Campylobacter jejuni subsp. jejuni serotype O:6 (strain 81116 / NCTC 11828) protein is Phenylalanine--tRNA ligase alpha subunit.